Here is a 255-residue protein sequence, read N- to C-terminus: 5'-nucleotidase SurE (255 aa).

The a divalent metal cation site is built by Asp8, Asp9, Ser39, and Asn91.

Belongs to the SurE nucleotidase family. The cofactor is a divalent metal cation.

The protein resides in the cytoplasm. The enzyme catalyses a ribonucleoside 5'-phosphate + H2O = a ribonucleoside + phosphate. In terms of biological role, nucleotidase that shows phosphatase activity on nucleoside 5'-monophosphates. This Acinetobacter baumannii (strain AB0057) protein is 5'-nucleotidase SurE.